Here is a 487-residue protein sequence, read N- to C-terminus: Cytochrome P450 2C5 (487 aa).

Cysteine 432 is a heme binding site.

This sequence belongs to the cytochrome P450 family. It depends on heme as a cofactor.

The protein localises to the endoplasmic reticulum membrane. It is found in the microsome membrane. The catalysed reaction is an organic molecule + reduced [NADPH--hemoprotein reductase] + O2 = an alcohol + oxidized [NADPH--hemoprotein reductase] + H2O + H(+). Functionally, cytochromes P450 are a group of heme-thiolate monooxygenases. In liver microsomes, this enzyme is involved in an NADPH-dependent electron transport pathway. It oxidizes a variety of structurally unrelated compounds, including steroids, fatty acids, and xenobiotics. This is Cytochrome P450 2C5 (CYP2C5) from Oryctolagus cuniculus (Rabbit).